The following is a 436-amino-acid chain: Phosphoribosylamine--glycine ligase (436 aa).

Residues 106 to 318 (RKLFEDYDIE…LADVCQAIVD (213 aa)) enclose the ATP-grasp domain. 133 to 196 (LDDFDRDVVV…EERLIGEEFT (64 aa)) serves as a coordination point for ATP. Glutamine 276, glutamate 288, and asparagine 290 together coordinate Mg(2+). Positions 276, 288, and 290 each coordinate Mn(2+).

Belongs to the GARS family. Mg(2+) is required as a cofactor. Requires Mn(2+) as cofactor.

It catalyses the reaction 5-phospho-beta-D-ribosylamine + glycine + ATP = N(1)-(5-phospho-beta-D-ribosyl)glycinamide + ADP + phosphate + H(+). It functions in the pathway purine metabolism; IMP biosynthesis via de novo pathway; N(1)-(5-phospho-D-ribosyl)glycinamide from 5-phospho-alpha-D-ribose 1-diphosphate: step 2/2. In Methanobrevibacter smithii (strain ATCC 35061 / DSM 861 / OCM 144 / PS), this protein is Phosphoribosylamine--glycine ligase.